We begin with the raw amino-acid sequence, 436 residues long: EPS I polysaccharide export inner membrane protein EpsE (436 aa).

12 helical membrane passes run Val-20–Leu-40, Phe-49–Gly-69, Leu-91–Leu-111, Ala-133–Met-153, Ala-160–Ile-180, Leu-185–Leu-205, Val-234–Met-254, Leu-261–Leu-281, Ala-307–Gly-327, Ala-341–Leu-361, Phe-375–Leu-395, and Gly-396–Phe-416.

This sequence to E.coli bicyclomycin resistance protein (BCR).

It localises to the cell inner membrane. Its function is as follows. Probably involved in polymerization and/or export of exopolysaccharide EPS I which functions as a virulence factor. May play a role in export of EPS I or its intermediates across the membranes. This chain is EPS I polysaccharide export inner membrane protein EpsE (epsE), found in Ralstonia solanacearum (Pseudomonas solanacearum).